Reading from the N-terminus, the 50-residue chain is Sperm protamine P1 (50 aa).

Belongs to the protamine P1 family. As to expression, testis.

The protein resides in the nucleus. It is found in the chromosome. Its function is as follows. Protamines substitute for histones in the chromatin of sperm during the haploid phase of spermatogenesis. They compact sperm DNA into a highly condensed, stable and inactive complex. The sequence is that of Sperm protamine P1 (PRM1) from Trachypithecus vetulus (Purple-faced langur).